The primary structure comprises 502 residues: MSDYTNTVTVEITSDDSLVADVIVVPVASGAVPRLPEDSKFRAYEDILQKLGVTGSKDELTRIPLDGSKHVVLAFIGVGKAFSATELMFAAGSAVRQIGARCIQIDFSVTQKDKLSAIVEGAFLGAYRFDKYRSKKSECPEVIRVSHNINGITDSECRQIIARAKVIAGSVGLAKDLVNTTGDDLYPAQFASFVAKDLEGIDHISVESWDEKRLQEKSCGGILGVGRGSNFPPRLVKISYTPGQYKKHLSLVGKGITFDTGGLSLKPASAMLGMKYDMTGAANVFAVLRIVALLRLSVRVTGWLCLAENMLSGSAIRPGDILRTYSGKTVEVTNTDAEGRLVLADGLALAGDERPDVIIDIATLTGAAKVALGESCSGLMGNNPDLLCSLEVAAKSVGEKFLAVPIDDDALQKALKSDIADIVNVPTSNKVPGMQFGAVFLKEFETTNDSGEAIPWAHLDVAGPANASYDTGFNSCGPTGVAVRSLVEFCRCLSSAPERKLF.

Mn(2+)-binding residues include Lys254 and Asp259. Lys266 is an active-site residue. Positions 277, 336, and 338 each coordinate Mn(2+). Residue Arg340 is part of the active site.

This sequence belongs to the peptidase M17 family. Mn(2+) serves as cofactor.

Its subcellular location is the cytoplasm. It catalyses the reaction Release of an N-terminal amino acid, Xaa-|-Yaa-, in which Xaa is preferably Leu, but may be other amino acids including Pro although not Arg or Lys, and Yaa may be Pro. Amino acid amides and methyl esters are also readily hydrolyzed, but rates on arylamides are exceedingly low.. The catalysed reaction is Release of an N-terminal amino acid, preferentially leucine, but not glutamic or aspartic acids.. Its function is as follows. Presumably involved in the processing and regular turnover of intracellular proteins. Catalyzes the removal of unsubstituted N-terminal amino acids from various peptides. This Tropheryma whipplei (strain TW08/27) (Whipple's bacillus) protein is Probable cytosol aminopeptidase.